Reading from the N-terminus, the 104-residue chain is Ribonuclease P protein component 4 (104 aa).

4 residues coordinate Zn(2+): Cys57, Cys60, Cys83, and Cys86.

The protein belongs to the eukaryotic/archaeal RNase P protein component 4 family. As to quaternary structure, consists of a catalytic RNA component and at least 4-5 protein subunits. Requires Zn(2+) as cofactor.

The protein localises to the cytoplasm. It carries out the reaction Endonucleolytic cleavage of RNA, removing 5'-extranucleotides from tRNA precursor.. Its function is as follows. Part of ribonuclease P, a protein complex that generates mature tRNA molecules by cleaving their 5'-ends. The protein is Ribonuclease P protein component 4 of Saccharolobus islandicus (strain L.S.2.15 / Lassen #1) (Sulfolobus islandicus).